The sequence spans 406 residues: Tryptophan synthase beta chain (406 aa).

The residue at position 95 (K95) is an N6-(pyridoxal phosphate)lysine.

This sequence belongs to the TrpB family. As to quaternary structure, tetramer of two alpha and two beta chains. Pyridoxal 5'-phosphate is required as a cofactor.

It catalyses the reaction (1S,2R)-1-C-(indol-3-yl)glycerol 3-phosphate + L-serine = D-glyceraldehyde 3-phosphate + L-tryptophan + H2O. Its pathway is amino-acid biosynthesis; L-tryptophan biosynthesis; L-tryptophan from chorismate: step 5/5. Functionally, the beta subunit is responsible for the synthesis of L-tryptophan from indole and L-serine. This is Tryptophan synthase beta chain from Azotobacter vinelandii (strain DJ / ATCC BAA-1303).